The following is a 121-amino-acid chain: Protransforming growth factor alpha (121 aa).

Residue leucine 1 is a signal peptide. Residues 2–16 (ENSTSLLSDPPVAAA) constitute a propeptide, removed in mature form. Topologically, residues 2–75 (ENSTSLLSDP…AVVAASQKKQ (74 aa)) are extracellular. Asparagine 3 is a glycosylation site (N-linked (GlcNAc...) asparagine). In terms of domain architecture, EGF-like spans 20–60 (HFNDCPDSHTQFCFHGTCRFLVQEDRPACVCHSGYVGARCE). 3 disulfide bridges follow: cysteine 24–cysteine 37, cysteine 32–cysteine 48, and cysteine 50–cysteine 59. Residues 67-121 (VVAASQKKQAITALVVVSIVALAVLIITCVLIHCCQVRKHCEWCRALICRHEKPS) constitute a propeptide, removed in mature form. The helical transmembrane segment at 76–101 (AITALVVVSIVALAVLIITCVLIHCC) threads the bilayer.

Interacts with the PDZ domains of MAGI3, SDCBP and SNTA1. The interaction with SDCBP, is required for the targeting to the cell surface. In the endoplasmic reticulum, in its immature form (i.e. with a prosegment and lacking full N-glycosylation), interacts with CNIH. In the Golgi apparatus, may form a complex with CNIH and GORASP2. Interacts (via cytoplasmic C-terminal domain) with NKD2. Hypothalamus.

The protein resides in the secreted. It is found in the extracellular space. Its subcellular location is the cell membrane. Its function is as follows. TGF alpha is a mitogenic polypeptide that is able to bind to the EGF receptor/EGFR and to act synergistically with TGF beta to promote anchorage-independent cell proliferation in soft agar. The chain is Protransforming growth factor alpha (TGFA) from Macaca mulatta (Rhesus macaque).